The following is a 428-amino-acid chain: MSYIGLQQDSGEYKIQKIHAREILDSRGNPTVEVDVFTPKGFGRASVPSGASTGTNEALELRDADPNRYGGKGVLTAVKNVNTIIQKELLGLDVRNQREIDELMIELDETENKSNLGANAILGVSMAVAKAAADSLNIPLYRYFGGSNAFTLPVPTMNVLNGGKHAGNELAIQEFMIQPKGAETFYEALQIGAEIYQTLGKFLENKYGRSSTNVGYEGGYAPKMGESTEALDALVHAIEEAGYTESEVTIGLDAAATEFYEEEFYNIDGKKLAAPELLDYYVELVNSYPILSIEDPFYEEAFEDFEALTNELWDTIIVGDDLFVTNIERLSKGVDMGAANALLLKVNQIGSISEAFDAASMASRNGYTVIVSHRSAETEDTTISDLAVAIGAEMIKTGAPARGERTAKYNQLLRIEEDLGEVAHYVQL.

Q173 is a (2R)-2-phosphoglycerate binding site. Catalysis depends on E217, which acts as the Proton donor. Residues D253, E294, and D320 each contribute to the Mg(2+) site. (2R)-2-phosphoglycerate is bound by residues K345, R374, S375, and K396. K345 functions as the Proton acceptor in the catalytic mechanism.

Belongs to the enolase family. Requires Mg(2+) as cofactor.

The protein resides in the cytoplasm. It is found in the secreted. The protein localises to the cell surface. It catalyses the reaction (2R)-2-phosphoglycerate = phosphoenolpyruvate + H2O. Its pathway is carbohydrate degradation; glycolysis; pyruvate from D-glyceraldehyde 3-phosphate: step 4/5. In terms of biological role, catalyzes the reversible conversion of 2-phosphoglycerate (2-PG) into phosphoenolpyruvate (PEP). It is essential for the degradation of carbohydrates via glycolysis. This chain is Enolase, found in Methanosarcina mazei (strain ATCC BAA-159 / DSM 3647 / Goe1 / Go1 / JCM 11833 / OCM 88) (Methanosarcina frisia).